The chain runs to 510 residues: ATP synthase subunit alpha (510 aa).

ATP is bound at residue 169-176 (GDRQTGKT).

This sequence belongs to the ATPase alpha/beta chains family. In terms of assembly, F-type ATPases have 2 components, CF(1) - the catalytic core - and CF(0) - the membrane proton channel. CF(1) has five subunits: alpha(3), beta(3), gamma(1), delta(1), epsilon(1). CF(0) has four main subunits: a(1), b(1), b'(1) and c(9-12).

The protein localises to the cell inner membrane. It carries out the reaction ATP + H2O + 4 H(+)(in) = ADP + phosphate + 5 H(+)(out). Functionally, produces ATP from ADP in the presence of a proton gradient across the membrane. The alpha chain is a regulatory subunit. This Rhodopseudomonas palustris (strain BisB5) protein is ATP synthase subunit alpha.